The primary structure comprises 360 residues: Probable L-asparaginase 1 (360 aa).

An N-terminal signal peptide occupies residues 1–16 (MWRSIISFLFFSVALC). Residues Asn-27, Asn-35, and Asn-40 are each glycosylated (N-linked (GlcNAc...) asparagine). The region spanning 39–359 (PNVTIFAMGG…QNITDIFSLE (321 aa)) is the Asparaginase/glutaminase domain. Thr-49 functions as the O-isoaspartyl threonine intermediate in the catalytic mechanism. N-linked (GlcNAc...) asparagine glycosylation is present at Asn-82. A substrate-binding site is contributed by Ser-96. N-linked (GlcNAc...) asparagine glycosylation is present at Asn-106. 129 to 130 (TD) contacts substrate. Residues Asn-144, Asn-179, Asn-246, Asn-302, and Asn-351 are each glycosylated (N-linked (GlcNAc...) asparagine).

It belongs to the asparaginase 1 family.

It is found in the secreted. The protein resides in the cell wall. The enzyme catalyses L-asparagine + H2O = L-aspartate + NH4(+). The sequence is that of Probable L-asparaginase 1 from Schizosaccharomyces pombe (strain 972 / ATCC 24843) (Fission yeast).